We begin with the raw amino-acid sequence, 272 residues long: Centromere protein V-like protein 3 (272 aa).

Over residues 1-17 (MGRVRNRATAQRRRRKR) the composition is skewed to basic residues. Disordered regions lie at residues 1–23 (MGRVRNRATAQRRRRKRPGDPPA) and 65–95 (RRAREAGSRDPLPSAPLPDPPAPAESPKELD). Residues 77–88 (PSAPLPDPPAPA) show a composition bias toward pro residues. Positions 133-246 (HTGGCHCGAV…EEVGGGDPGE (114 aa)) constitute a CENP-V/GFA domain. C137, C139, C157, C159, C162, C201, and C204 together coordinate Zn(2+). The tract at residues 240-272 (GGGDPGEEAAEEHKAIHKTSSQSAPACPREQEQ) is disordered.

This sequence belongs to the Gfa family. Zn(2+) serves as cofactor.

The polypeptide is Centromere protein V-like protein 3 (Homo sapiens (Human)).